A 389-amino-acid chain; its full sequence is Putative zinc finger CCCH domain-containing protein 10 (389 aa).

Residues 1–11 (MANVSFTFDSQ) are compositionally biased toward polar residues. The tract at residues 1 to 110 (MANVSFTFDS…QDRRGSESRM (110 aa)) is disordered. Basic and acidic residues-rich tracts occupy residues 12-52 (EQNK…RVSE) and 86-110 (RSHE…ESRM). 2 consecutive C3H1-type zinc fingers follow at residues 131–157 (RPGE…YNHP) and 158–190 (PLQE…HPKE). Residues 183-296 (CPFNHPKERD…ATATGKVSGK (114 aa)) form a disordered region. 2 stretches are compositionally biased toward basic and acidic residues: residues 204-243 (PDLR…KEDA) and 251-284 (RPRD…RSSR).

The protein is Putative zinc finger CCCH domain-containing protein 10 of Arabidopsis thaliana (Mouse-ear cress).